Consider the following 360-residue polypeptide: Peptide chain release factor 1 (360 aa).

N5-methylglutamine is present on Q237.

Belongs to the prokaryotic/mitochondrial release factor family. In terms of processing, methylated by PrmC. Methylation increases the termination efficiency of RF1.

The protein localises to the cytoplasm. Peptide chain release factor 1 directs the termination of translation in response to the peptide chain termination codons UAG and UAA. The chain is Peptide chain release factor 1 (prfA) from Pseudomonas aeruginosa (strain ATCC 15692 / DSM 22644 / CIP 104116 / JCM 14847 / LMG 12228 / 1C / PRS 101 / PAO1).